A 765-amino-acid polypeptide reads, in one-letter code: ATP-dependent zinc metalloprotease FtsH (765 aa).

At 1–27 (MSNTSNFNERVTENAKPPKNVKSIIWK) the chain is on the cytoplasmic side. Residues 28–48 (TIGIIIVMAIIIGLILFYVLP) form a helical membrane-spanning segment. At 49–213 (RNTIANISNI…NVQLPNQSTA (165 aa)) the chain is on the extracellular side. The helical transmembrane segment at 214 to 234 (ILTQFLTSIIPFVILIVIYIV) threads the bilayer. Topologically, residues 235–765 (IARRFSRTMG…EPTASTASSN (531 aa)) are cytoplasmic. Residue 314–321 (GPPGTGKT) participates in ATP binding. H536 is a Zn(2+) binding site. E537 is an active-site residue. Residues H540 and D615 each coordinate Zn(2+). Positions 730–748 (KAAAEKEEQAEKAKLDHQS) are enriched in basic and acidic residues. Residues 730–765 (KAAAEKEEQAEKAKLDHQSDSAQPQEEPTASTASSN) are disordered. Polar residues predominate over residues 749-765 (DSAQPQEEPTASTASSN).

In the central section; belongs to the AAA ATPase family. The protein in the C-terminal section; belongs to the peptidase M41 family. Homohexamer. Zn(2+) is required as a cofactor.

The protein localises to the cell membrane. In terms of biological role, acts as a processive, ATP-dependent zinc metallopeptidase for both cytoplasmic and membrane proteins. Plays a role in the quality control of integral membrane proteins. The chain is ATP-dependent zinc metalloprotease FtsH from Mycoplasmoides gallisepticum (strain R(high / passage 156)) (Mycoplasma gallisepticum).